Here is a 1398-residue protein sequence, read N- to C-terminus: MNQEVMNLFNPQAPAQVFDSIRISLASPEKILSWSFGEIKKPETINYRTFKPERDGLFCARIFGPIKDYECLCGKYKRMKYKGVICEKCGVEVTLSRVRRERMGHIELAAPVAHIWFLKSLPSRIGTLLDMTLKDIERVLYFENYIVTEPGLTALKEHQLLSEEEYMIAVDEYGEDSFTAMIGAEAIHDLLAGMDLEKIAGDLRSELASTTSELKQKKYLKRLKVVENFMESGNRPEWMIMKVVPVIPPDLRPLVPLDGGRFATSDLNDLYRRVINRNNRLKRLIELRAPGIIVRNEKRMLQEAVDALFDNGRRGRVITGANKRPLKSLSDMLKGKQGRFRQNLLGKRVDYSGRSVIVTGPELKLHQCGLPKKMALELFKPFIYARLDAKGYSSTVKQAKKLVEKERPEVWDILDEVIREHPVLLNRAPTLHRLGIQAFEPILIEGKAIQLHPLVCTAFNADFDGDQMAVHVPLSLEAQLEARVLMMSTNNILHPASGAPIIVPSQDMVLGLYYLSIVNQNEPGEGMVFADMGELQHALETKAVTLHAKIKGRFRTVDAEGKVVSKIHDTTPGRMIIGELLPKNVNVPYETANQEMTKKNISKMIDTVYRHCGQKETVIFCDRIMALGFAHACRAGISFGKDDMLIPDSKIKLVSDTEALAKEYEQQYNDGLITQGEKYNKVVDAWAKCSEKVADEMMARIKAVEFEDNGRQKPMNSIYMMSHSGARGSPTQMRQLAGMRGLMAKPSGEIIETPIISNFKEGLTVLEYFNSTHGARKGLADTALKTANSGYLTRRLVDVAQDCIVNSVDCGTDKGLTMQPIVDAGQVVASVGQRVLGRTALDDINHPVTGDLLVKAGTLMDERDVEQIEKAGVQSVRIRSALTCEVRVGVCAVCYGRDLARGTPVNQGEAVGVIAAQSIGEPGTQLTMRTFHMGGTAQVVDSSFLEASYEGKVEIRNRNVVRNSDGQQMVMGRNMAVLILDEAGKERATHRVTYGSRIFVDDGDKVKRGQRIAEWDPYTRPILTEIEGRVAFEDLVDGISVQETADESTGITKREVIDWRSTPRGNDLKPAIVVQDAKGKVGKLSKGGDARFLLSVEAILSVEPGAQVRPGDVLARIPMESAKTKDITGGLPRVAELFEARRPKDHAIIAEIDGTIRFGRDYKNKRRIIIEPHDSTLEPVEYLIPKGKPFHLQDGDVIEKGDYILDGNPAPHDILAIKGVEALASYLVNEIQEVYRLQGVSINDKHIEVIVRQMLQKVEITTQGDSTYIPGDHVDVIELEEVNERLIEDGKKPAEGQPVLLGITKASLQTPSFISAASFQETTRVLTEAAVAGKTDMLQGLKENVIVGRLIPAGTGGTMSQIRRIATSRDELIIDERRKASGVEVAEPMLADMTTAAQ.

Residues Cys71, Cys73, Cys86, and Cys89 each contribute to the Zn(2+) site. Mg(2+)-binding residues include Asp462, Asp464, and Asp466. Positions 810, 884, 891, and 894 each coordinate Zn(2+).

Belongs to the RNA polymerase beta' chain family. The RNAP catalytic core consists of 2 alpha, 1 beta, 1 beta' and 1 omega subunit. When a sigma factor is associated with the core the holoenzyme is formed, which can initiate transcription. Requires Mg(2+) as cofactor. It depends on Zn(2+) as a cofactor.

It carries out the reaction RNA(n) + a ribonucleoside 5'-triphosphate = RNA(n+1) + diphosphate. DNA-dependent RNA polymerase catalyzes the transcription of DNA into RNA using the four ribonucleoside triphosphates as substrates. This Mesorhizobium japonicum (strain LMG 29417 / CECT 9101 / MAFF 303099) (Mesorhizobium loti (strain MAFF 303099)) protein is DNA-directed RNA polymerase subunit beta'.